The chain runs to 419 residues: Tryptophan synthase beta chain (419 aa).

Lys-98 is subject to N6-(pyridoxal phosphate)lysine.

This sequence belongs to the TrpB family. Tetramer of two alpha and two beta chains. Pyridoxal 5'-phosphate serves as cofactor.

The catalysed reaction is (1S,2R)-1-C-(indol-3-yl)glycerol 3-phosphate + L-serine = D-glyceraldehyde 3-phosphate + L-tryptophan + H2O. The protein operates within amino-acid biosynthesis; L-tryptophan biosynthesis; L-tryptophan from chorismate: step 5/5. Functionally, the beta subunit is responsible for the synthesis of L-tryptophan from indole and L-serine. The polypeptide is Tryptophan synthase beta chain (Ruegeria sp. (strain TM1040) (Silicibacter sp.)).